Consider the following 164-residue polypeptide: Respiratory growth induced protein 2 (164 aa).

Belongs to the RGI1 family.

The protein localises to the cytoplasm. In terms of biological role, involved in the control of energetic metabolism and significantly contribute to cell fitness, especially under respiratory growth conditions. This Saccharomyces cerevisiae (strain JAY291) (Baker's yeast) protein is Respiratory growth induced protein 2 (RGI2).